The sequence spans 355 residues: Mitochondrial import inner membrane translocase subunit TIM50 (355 aa).

Residues 1–44 constitute a mitochondrion transit peptide; the sequence is MAASAAVFLRLRSGLRQGARGLCARLATPPPRAPDQAAEIGSRA. The tract at residues 25-61 is disordered; that stretch reads RLATPPPRAPDQAAEIGSRAGTKAQTQGPQQQRSSEG. The Mitochondrial matrix segment spans residues 45–67; sequence GTKAQTQGPQQQRSSEGPSYAKK. The span at 47–61 shows a compositional bias: polar residues; it reads KAQTQGPQQQRSSEG. Residues 68–88 form a helical membrane-spanning segment; sequence VALWLARLLGAGGTVSVIYIF. Residues 89–355 lie on the Mitochondrial intermembrane side of the membrane; the sequence is GNNAVDENGA…SRLWPRSKQP (267 aa). In terms of domain architecture, FCP1 homology spans 145–288; that stretch reads YYQPPYTLVL…LDLSAFLKTI (144 aa). The residue at position 343 (Ser-343) is a Phosphoserine.

It belongs to the TIM50 family. As to quaternary structure, component of the TIM23 complex at least composed of TIMM23, TIMM17 (TIMM17A or TIMM17B) and TIMM50; within this complex, directly interacts with TIMM23. The complex interacts with the TIMM44 component of the PAM complex and with DNAJC15.

The protein localises to the mitochondrion inner membrane. Essential component of the TIM23 complex, a complex that mediates the translocation of transit peptide-containing proteins across the mitochondrial inner membrane. Has some phosphatase activity in vitro; however such activity may not be relevant in vivo. The chain is Mitochondrial import inner membrane translocase subunit TIM50 (TIMM50) from Bos taurus (Bovine).